The primary structure comprises 285 residues: NAD kinase (285 aa).

Residue Asp-64 is the Proton acceptor of the active site. NAD(+) is bound by residues 64–65 (DG), 138–139 (ND), Arg-149, Arg-166, Asp-168, Leu-176, 179–184 (SGYTIS), and Gln-238.

The protein belongs to the NAD kinase family. Requires a divalent metal cation as cofactor.

The protein resides in the cytoplasm. It catalyses the reaction NAD(+) + ATP = ADP + NADP(+) + H(+). Its function is as follows. Involved in the regulation of the intracellular balance of NAD and NADP, and is a key enzyme in the biosynthesis of NADP. Catalyzes specifically the phosphorylation on 2'-hydroxyl of the adenosine moiety of NAD to yield NADP. The protein is NAD kinase of Lawsonia intracellularis (strain PHE/MN1-00).